Consider the following 360-residue polypeptide: Alpha-2-macroglobulin receptor-associated protein (360 aa).

A signal peptide spans 1 to 28 (MAPRRERVSTLPRLQLLVLLLLPLMLVP). Phosphoserine is present on residues serine 53 and serine 138. The stretch at 184–302 (EKIQEYNVLL…KHNHYQKQLE (119 aa)) forms a coiled coil. The segment at 240–356 (RLRKVSHQGY…DLSSRVSRAR (117 aa)) is LDL receptor binding. Asparagine 271 carries N-linked (GlcNAc...) asparagine glycosylation. The Prevents secretion from ER signature appears at 357–360 (HNEL).

The protein belongs to the alpha-2-MRAP family. As to quaternary structure, interacts with the LRP1/alpha-2-macroglobulin receptor heavy and light chains; the interaction is transient and coincides with a reduction of ligand binding by the receptor. Interacts with LRP2/glycoprotein 330. Interacts with LRP1B; binding is followed by internalization and degradation. Interacts with LDLR. Interacts with SORL1. Interacts with LRP1; this interaction is followed by rapid internalization. N-glycosylated. Highly expressed in PYS-2 parietal endoderm cells and in the kidney. The RNA level increased about 10-fold during differentiation of F9 embryonal carcinoma cells to parietal endoderm cells.

It localises to the rough endoplasmic reticulum lumen. The protein localises to the endoplasmic reticulum-Golgi intermediate compartment lumen. The protein resides in the golgi apparatus. Its subcellular location is the cis-Golgi network. It is found in the golgi apparatus lumen. It localises to the endosome lumen. The protein localises to the cell surface. Functionally, molecular chaperone for LDL receptor-related proteins that may regulate their ligand binding activity along the secretory pathway. The chain is Alpha-2-macroglobulin receptor-associated protein (Lrpap1) from Mus musculus (Mouse).